The sequence spans 543 residues: Cytochrome P450 monooxygenase CYP1 (543 aa).

A helical membrane pass occupies residues 40–60 (SSFFTRILIAFIGLCLLSIFS). Residues asparagine 210 and asparagine 367 are each glycosylated (N-linked (GlcNAc...) asparagine). Residue cysteine 478 participates in heme binding. Asparagine 517 is a glycosylation site (N-linked (GlcNAc...) asparagine).

The protein belongs to the cytochrome P450 family. Heme serves as cofactor.

Its subcellular location is the membrane. The protein operates within secondary metabolite biosynthesis. Functionally, cytochrome P450 monooxygenase; part of the gene cluster that mediates the biosynthesis of a tyrosine-derived cytochalasan acting as a fungal signal recognized by resistant rice plants and leads to avirulence in Pi33 resistant rice cultivars. The first step in the pathway is catalyzed by the hybrid PKS-NRPS ACE1, assisted by the enoyl reductase RAP1, that are responsible for fusion of the tyrosine precursor and the polyketide backbone. The polyketide synthase module (PKS) of ACE1 is responsible for the synthesis of the polyketide backbone and the downstream nonribosomal peptide synthetase (NRPS) amidates the carboxyl end of the polyketide with the tyrosine precursor. Because ACE1 lacks a designated enoylreductase (ER) domain, the required activity is provided the enoyl reductase RAP1. Reduction by the hydrolyase ORFZ, followed by dehydration and intra-molecular Diels-Alder cyclization by the Diels-Alderase ORF3 then yield the required isoindolone-fused macrocycle. A number of oxidative steps catalyzed by the tailoring enzymes identified within the cluster, including cytochrome P450 monooxygenases CYP1 to CYP4, the FAD-linked oxidoreductase OXR2 and the short-chain dehydrogenase/reductase OXR1, are further required to afford the final cytochalasans that confer avirulence and which have still to be identified. The monooxygenase CYP1 has been shown to be a site-selective C-18 hydroxylase whereas the function of CYP3 is the site-selective epoxidation of the C-6/C-7 olefin that is present in some intermediate compounds. Finally, SYN2 and RAP2 are not required for avirulence in Pi33 resistant rice cultivars. This is Cytochrome P450 monooxygenase CYP1 from Pyricularia oryzae (strain 70-15 / ATCC MYA-4617 / FGSC 8958) (Rice blast fungus).